Consider the following 325-residue polypeptide: Olfactory receptor 10AC1 (325 aa).

The Extracellular segment spans residues 1–26 (MDSPSNATVPCGFLLQGFSEFPHLRP). Asn6 carries N-linked (GlcNAc...) asparagine glycosylation. Residues 27 to 47 (VLFLLLLGVHLATLGGNLLIL) traverse the membrane as a helical segment. Residues 48–57 (VAVASMPSRQ) lie on the Cytoplasmic side of the membrane. A helical transmembrane segment spans residues 58–78 (PMLLFLCQLSAIELCYTLVVV). The Extracellular portion of the chain corresponds to 79-101 (PRSLVDLSTPGHRRGSPISFLSC). Residues 102–122 (AFQMQMFVALGGAECFLLAAM) form a helical membrane-spanning segment. Residues 123–147 (AYDRYVAICHPLRYAAVVTPGLCAR) are Cytoplasmic-facing. Residues 148–168 (LALACCLRGLAVSVGLTVAIF) traverse the membrane as a helical segment. Residues 169–171 (HLP) lie on the Extracellular side of the membrane. A helical transmembrane segment spans residues 172-192 (FCGSRLLLHFFCDITALLHLA). Over 193 to 200 (CTRSYADE) the chain is Cytoplasmic. The helical transmembrane segment at 201-221 (LPLLGACLVLLLLPSVLILAS) threads the bilayer. The Extracellular segment spans residues 222 to 243 (YGAIAAALRRLRCPKGRGKAAS). A helical transmembrane segment spans residues 244 to 264 (TCALHLAVTFLHYGCATFMYV). The Cytoplasmic segment spans residues 265–325 (RPRASYSPRL…QAPGGDLREL (61 aa)).

Belongs to the G-protein coupled receptor 1 family.

The protein resides in the cell membrane. Functionally, odorant receptor. This is Olfactory receptor 10AC1 (OR10AC1) from Homo sapiens (Human).